The sequence spans 501 residues: Pyruvate dehydrogenase protein X component, mitochondrial (501 aa).

Residues 1–53 (MAASWRLHCNQPLLRYLLGFSSRRSLGLAQGAAAWPVDRGASWRWFHSTQLLQ) constitute a mitochondrion transit peptide. One can recognise a Lipoyl-binding domain in the interval 56–132 (PIKVLMPSLS…QLGSLIALMV (77 aa)). Residue K97 is modified to N6-lipoyllysine. A disordered region spans residues 145-176 (KDVSAPPPVSKPPAPTQPSPQPQIPCPARKEH). A compositionally biased stretch (pro residues) spans 149–169 (APPPVSKPPAPTQPSPQPQIP). One can recognise a Peripheral subunit-binding (PSBD) domain in the interval 183–220 (RLSPAARNILEKHSLDASQGTATGPRGIFTKEDALKLV). K194 carries the post-translational modification N6-acetyllysine. At S196 the chain carries Phosphoserine. The disordered stretch occupies residues 228-256 (ITESRPASAPPPSLSASVPPQATAGPSYP). K394 bears the N6-succinyllysine mark.

It belongs to the 2-oxoacid dehydrogenase family. Part of the inner core of the multimeric pyruvate dehydrogenase complex that is composed of about 48 DLAT and 12 PDHX molecules. This core binds multiple copies of pyruvate dehydrogenase (subunits PDH1A and PDHB, E1), dihydrolipoamide acetyltransferase (DLAT, E2) and lipoamide dehydrogenase (DLD, E3). Interacts with SIRT4. Interacts with DLD. Delipoylated at Lys-97 by SIRT4, delipoylation decreases the PHD complex activity.

It localises to the mitochondrion matrix. Its function is as follows. Required for anchoring dihydrolipoamide dehydrogenase (E3) to the dihydrolipoamide transacetylase (E2) core of the pyruvate dehydrogenase complexes of eukaryotes. This specific binding is essential for a functional PDH complex. This chain is Pyruvate dehydrogenase protein X component, mitochondrial (Pdhx), found in Mus musculus (Mouse).